A 486-amino-acid chain; its full sequence is Glycogen synthase (486 aa).

Position 20 (K20) interacts with ADP-alpha-D-glucose.

The protein belongs to the glycosyltransferase 1 family. Bacterial/plant glycogen synthase subfamily.

It catalyses the reaction [(1-&gt;4)-alpha-D-glucosyl](n) + ADP-alpha-D-glucose = [(1-&gt;4)-alpha-D-glucosyl](n+1) + ADP + H(+). Its pathway is glycan biosynthesis; glycogen biosynthesis. Its function is as follows. Synthesizes alpha-1,4-glucan chains using ADP-glucose. This is Glycogen synthase from Aeromonas salmonicida (strain A449).